We begin with the raw amino-acid sequence, 316 residues long: 4-hydroxy-3-methylbut-2-enyl diphosphate reductase (316 aa).

C12 contributes to the [4Fe-4S] cluster binding site. (2E)-4-hydroxy-3-methylbut-2-enyl diphosphate-binding residues include H41 and H74. Dimethylallyl diphosphate contacts are provided by H41 and H74. Residues H41 and H74 each coordinate isopentenyl diphosphate. Residue C96 participates in [4Fe-4S] cluster binding. H124 provides a ligand contact to (2E)-4-hydroxy-3-methylbut-2-enyl diphosphate. H124 is a binding site for dimethylallyl diphosphate. H124 serves as a coordination point for isopentenyl diphosphate. E126 serves as the catalytic Proton donor. T167 contacts (2E)-4-hydroxy-3-methylbut-2-enyl diphosphate. A [4Fe-4S] cluster-binding site is contributed by C197. (2E)-4-hydroxy-3-methylbut-2-enyl diphosphate contacts are provided by S225, S226, N227, and S269. Dimethylallyl diphosphate is bound by residues S225, S226, N227, and S269. 4 residues coordinate isopentenyl diphosphate: S225, S226, N227, and S269.

It belongs to the IspH family. As to quaternary structure, homodimer. Requires [4Fe-4S] cluster as cofactor.

It carries out the reaction isopentenyl diphosphate + 2 oxidized [2Fe-2S]-[ferredoxin] + H2O = (2E)-4-hydroxy-3-methylbut-2-enyl diphosphate + 2 reduced [2Fe-2S]-[ferredoxin] + 2 H(+). It catalyses the reaction dimethylallyl diphosphate + 2 oxidized [2Fe-2S]-[ferredoxin] + H2O = (2E)-4-hydroxy-3-methylbut-2-enyl diphosphate + 2 reduced [2Fe-2S]-[ferredoxin] + 2 H(+). The protein operates within isoprenoid biosynthesis; dimethylallyl diphosphate biosynthesis; dimethylallyl diphosphate from (2E)-4-hydroxy-3-methylbutenyl diphosphate: step 1/1. Its pathway is isoprenoid biosynthesis; isopentenyl diphosphate biosynthesis via DXP pathway; isopentenyl diphosphate from 1-deoxy-D-xylulose 5-phosphate: step 6/6. Its function is as follows. Catalyzes the conversion of 1-hydroxy-2-methyl-2-(E)-butenyl 4-diphosphate (HMBPP) into a mixture of isopentenyl diphosphate (IPP) and dimethylallyl diphosphate (DMAPP). Acts in the terminal step of the DOXP/MEP pathway for isoprenoid precursor biosynthesis. This chain is 4-hydroxy-3-methylbut-2-enyl diphosphate reductase, found in Escherichia coli (strain UTI89 / UPEC).